Here is a 314-residue protein sequence, read N- to C-terminus: Taste receptor type 2 member 42 (314 aa).

At 1-7 (MATELDK) the chain is on the extracellular side. Residues 8–28 (IFLILAIAEFIISMLGNVFIG) traverse the membrane as a helical segment. At 29–50 (LVNCSEGIKNQKVFSADFILTC) the chain is on the cytoplasmic side. The chain crosses the membrane as a helical span at residues 51–71 (LAISTIGQLLVILFDSFLVGL). Over 72–101 (ASHLYTTYRLGKTVIMLWHMTNHLTTWLAT) the chain is Extracellular. Residues 102 to 122 (CLSIFYFFKIAHFPHSLFLWL) traverse the membrane as a helical segment. Residues 123-127 (RWRMN) lie on the Cytoplasmic side of the membrane. A helical membrane pass occupies residues 128–148 (GMIVMLLILSLFLLIFDSLVL). At 149–187 (EIFIDISLNIIDKSNLTLYLDESKTLYDKLSILKTLLSL) the chain is on the extracellular side. N-linked (GlcNAc...) asparagine glycosylation is present at asparagine 163. The chain crosses the membrane as a helical span at residues 188–208 (TSFIPFSLFLTSLLFLFLSLV). Topologically, residues 209–238 (RHTRNLKLSSLGSRDSSTEAHRRAMKMVMS) are cytoplasmic. Residues 239 to 259 (FLFLFIVHFFSLQVANWIFFM) form a helical membrane-spanning segment. Residues 260-265 (LWNNKC) lie on the Extracellular side of the membrane. The helical transmembrane segment at 266 to 286 (IKFVMLALNAFPSCHSFILIL) threads the bilayer. Over 287–314 (GNSKLQQTAVRLLWHLRNYTKTPNPLPL) the chain is Cytoplasmic.

It belongs to the G-protein coupled receptor T2R family.

Its subcellular location is the membrane. Functionally, receptor that may play a role in the perception of bitterness and is gustducin-linked. May play a role in sensing the chemical composition of the gastrointestinal content. The activity of this receptor may stimulate alpha gustducin, mediate PLC-beta-2 activation and lead to the gating of TRPM5. The sequence is that of Taste receptor type 2 member 42 (TAS2R42) from Homo sapiens (Human).